Reading from the N-terminus, the 171-residue chain is ATP synthase subunit b 2 (171 aa).

The chain crosses the membrane as a helical span at residues 9–29; the sequence is APWHHPVFWVAVAFVLFFVLF.

It belongs to the ATPase B chain family. F-type ATPases have 2 components, F(1) - the catalytic core - and F(0) - the membrane proton channel. F(1) has five subunits: alpha(3), beta(3), gamma(1), delta(1), epsilon(1). F(0) has three main subunits: a(1), b(2) and c(10-14). The alpha and beta chains form an alternating ring which encloses part of the gamma chain. F(1) is attached to F(0) by a central stalk formed by the gamma and epsilon chains, while a peripheral stalk is formed by the delta and b chains.

Its subcellular location is the cell inner membrane. Functionally, f(1)F(0) ATP synthase produces ATP from ADP in the presence of a proton or sodium gradient. F-type ATPases consist of two structural domains, F(1) containing the extramembraneous catalytic core and F(0) containing the membrane proton channel, linked together by a central stalk and a peripheral stalk. During catalysis, ATP synthesis in the catalytic domain of F(1) is coupled via a rotary mechanism of the central stalk subunits to proton translocation. Its function is as follows. Component of the F(0) channel, it forms part of the peripheral stalk, linking F(1) to F(0). The polypeptide is ATP synthase subunit b 2 (Granulibacter bethesdensis (strain ATCC BAA-1260 / CGDNIH1)).